A 154-amino-acid polypeptide reads, in one-letter code: 3-hydroxyacyl-[acyl-carrier-protein] dehydratase FabZ (154 aa).

The active site involves His54.

This sequence belongs to the thioester dehydratase family. FabZ subfamily.

The protein localises to the cytoplasm. It catalyses the reaction a (3R)-hydroxyacyl-[ACP] = a (2E)-enoyl-[ACP] + H2O. Involved in unsaturated fatty acids biosynthesis. Catalyzes the dehydration of short chain beta-hydroxyacyl-ACPs and long chain saturated and unsaturated beta-hydroxyacyl-ACPs. This Chlamydia caviae (strain ATCC VR-813 / DSM 19441 / 03DC25 / GPIC) (Chlamydophila caviae) protein is 3-hydroxyacyl-[acyl-carrier-protein] dehydratase FabZ.